The primary structure comprises 396 residues: MSKNKLNLVLPPVNTEATVAAATVAPTPPFKTPSGTDTHSLLGKPKTSIDALTETLEGLDMGDTERKRIKMFLSQKEKIGELSDEDLEKLGELGSGNGGVVMKVRHTHTHLIMARKLIHLEVKPAIKKQILRELKVLHECNFPHIVGFYGAFYSDGEISICMEYMDGGSLDLILKRAGRIPESILGRITLAVLKGLSYLRDNHAIIHRDVKPSNILVNSSGEIKICDFGVSGQLIDSMANSFVGTRSYMSPERLQGTHYSVQSDIWSLGLSLVEMAIGMYPIPPPNTATLESIFADNAEESGQPTDEPRAMAIFELLDYIVNEPPPKLEHKIFSTEFKDFVDICLKKQPDERADLKTLLSHPWIRKAELEEVDISGWVCKTMDLPPSTPKRNTSPN.

Residues 25–44 (APTPPFKTPSGTDTHSLLGK) are disordered. A Protein kinase domain is found at 87-364 (LEKLGELGSG…LKTLLSHPWI (278 aa)). ATP contacts are provided by residues 93–101 (LGSGNGGVV) and Lys-116. Asp-209 acts as the Proton acceptor in catalysis. Ser-237 and Ser-241 each carry phosphoserine; by RAF.

It belongs to the protein kinase superfamily. STE Ser/Thr protein kinase family. MAP kinase kinase subfamily. As to quaternary structure, interacts with Raf and ksr; Dsor1 binding to ksr probably promotes ksr and Raf dimerization and ksr-mediated Raf transactivation. Phosphorylation on Ser/Thr by MAP kinase kinase kinases regulates positively the kinase activity.

It carries out the reaction L-seryl-[protein] + ATP = O-phospho-L-seryl-[protein] + ADP + H(+). It catalyses the reaction L-threonyl-[protein] + ATP = O-phospho-L-threonyl-[protein] + ADP + H(+). The catalysed reaction is L-tyrosyl-[protein] + ATP = O-phospho-L-tyrosyl-[protein] + ADP + H(+). Functionally, required downstream of Raf in the sevenless (sev), torso (tor), and Drosophila EGF receptor homolog (DER) signal transduction pathways. Involved in both positive regulation (at the posterior terminus) and negative regulation (at the anterior domain) of tll, as in other terminal class gene products, maybe via the ERK-A kinase. The sequence is that of Dual specificity mitogen-activated protein kinase kinase dSOR1 (Dsor1) from Drosophila melanogaster (Fruit fly).